Here is a 1011-residue protein sequence, read N- to C-terminus: DNA-directed RNA polymerase 2, chloroplastic/mitochondrial (1011 aa).

The interval 307–326 is disordered; that stretch reads KGDDNEESGGVENETSMKEQ. Active-site residues include Asp712, Lys787, and Asp944.

The protein belongs to the phage and mitochondrial RNA polymerase family. Interacts with NIP1 and NIP2.

Its subcellular location is the plastid. It localises to the chloroplast. The protein resides in the mitochondrion. The catalysed reaction is RNA(n) + a ribonucleoside 5'-triphosphate = RNA(n+1) + diphosphate. In terms of biological role, DNA-dependent RNA polymerase catalyzes the transcription of DNA into RNA using the four ribonucleoside triphosphates as substrates. This chain is DNA-directed RNA polymerase 2, chloroplastic/mitochondrial (RPOT2), found in Arabidopsis thaliana (Mouse-ear cress).